Reading from the N-terminus, the 291-residue chain is ATP synthase gamma chain (291 aa).

It belongs to the ATPase gamma chain family. F-type ATPases have 2 components, CF(1) - the catalytic core - and CF(0) - the membrane proton channel. CF(1) has five subunits: alpha(3), beta(3), gamma(1), delta(1), epsilon(1). CF(0) has three main subunits: a, b and c.

The protein localises to the cell inner membrane. Its function is as follows. Produces ATP from ADP in the presence of a proton gradient across the membrane. The gamma chain is believed to be important in regulating ATPase activity and the flow of protons through the CF(0) complex. The sequence is that of ATP synthase gamma chain from Neisseria meningitidis serogroup B (strain ATCC BAA-335 / MC58).